Reading from the N-terminus, the 355-residue chain is UDP-N-acetylglucosamine--N-acetylmuramyl-(pentapeptide) pyrophosphoryl-undecaprenol N-acetylglucosamine transferase (355 aa).

Residues 15–17 (TGG), asparagine 127, arginine 163, serine 191, isoleucine 244, 263–268 (ALTVSE), and glutamine 288 contribute to the UDP-N-acetyl-alpha-D-glucosamine site.

This sequence belongs to the glycosyltransferase 28 family. MurG subfamily.

Its subcellular location is the cell inner membrane. The enzyme catalyses di-trans,octa-cis-undecaprenyl diphospho-N-acetyl-alpha-D-muramoyl-L-alanyl-D-glutamyl-meso-2,6-diaminopimeloyl-D-alanyl-D-alanine + UDP-N-acetyl-alpha-D-glucosamine = di-trans,octa-cis-undecaprenyl diphospho-[N-acetyl-alpha-D-glucosaminyl-(1-&gt;4)]-N-acetyl-alpha-D-muramoyl-L-alanyl-D-glutamyl-meso-2,6-diaminopimeloyl-D-alanyl-D-alanine + UDP + H(+). It participates in cell wall biogenesis; peptidoglycan biosynthesis. Cell wall formation. Catalyzes the transfer of a GlcNAc subunit on undecaprenyl-pyrophosphoryl-MurNAc-pentapeptide (lipid intermediate I) to form undecaprenyl-pyrophosphoryl-MurNAc-(pentapeptide)GlcNAc (lipid intermediate II). The chain is UDP-N-acetylglucosamine--N-acetylmuramyl-(pentapeptide) pyrophosphoryl-undecaprenol N-acetylglucosamine transferase from Photorhabdus laumondii subsp. laumondii (strain DSM 15139 / CIP 105565 / TT01) (Photorhabdus luminescens subsp. laumondii).